The primary structure comprises 735 residues: Protein STRUBBELIG-RECEPTOR FAMILY 2 (735 aa).

The signal sequence occupies residues 1 to 23 (MKTKQQLRFLATILLTTILFVLA). Residues 24-297 (KTDTDPLEVL…KKKKKGIGAG (274 aa)) lie on the Extracellular side of the membrane. LRR repeat units lie at residues 78–94 (LRELKLLGSLGNQLQHL), 96–119 (NLKILDVSFNNLEGEIPFGLPPNA), 120–140 (THINMAYNNLTQSIPFSLPLM), 142–163 (SLQSLNLSHNSLSGPLGNVFSG), 165–187 (QIKEMDLSFNNLTGDLPSSFGTL), 189–211 (NLTSLYLQNNRLTGSVIYLADLP), 212–232 (LADLNIEDNQFSGIIPSHFQS), and 233–253 (IPHLWIWGNKFHVEPNYKPWK). N-linked (GlcNAc...) asparagine glycosylation is found at asparagine 118, asparagine 128, asparagine 147, asparagine 175, and asparagine 189. N-linked (GlcNAc...) asparagine glycosylation occurs at asparagine 264. The chain crosses the membrane as a helical span at residues 298–318 (STFLLVGGLALLGTFFALFAV). Topologically, residues 319-735 (RMNHRRAQNL…SSPTFSYLSS (417 aa)) are cytoplasmic. Residues 358 to 378 (PQIKRFQPPPAPQLRHLPSPP) form a disordered region. A Protein kinase domain is found at 415-695 (FSEENLLGEG…EIVEALTALI (281 aa)).

The protein belongs to the protein kinase superfamily. Ser/Thr protein kinase family. In terms of tissue distribution, expressed in seedlings, roots, stems, leaves, flowers and siliques.

It localises to the membrane. This Arabidopsis thaliana (Mouse-ear cress) protein is Protein STRUBBELIG-RECEPTOR FAMILY 2 (SRF2).